Here is a 1322-residue protein sequence, read N- to C-terminus: C-Jun-amino-terminal kinase-interacting protein 3 (1322 aa).

Residues 12-100 (VVVYQDDYCS…LTQYEREKAL (89 aa)) enclose the RH1 domain. The interval 50-80 (EVVKELMPLVVNVLENLDSVLSENQEHEVEL) is kinesin-binding domain (KBD); essential for its function in axon elongation. Positions 66-167 (LDSVLSENQE…KKEYNALHQR (102 aa)) form a coiled coil. Disordered regions lie at residues 183–211 (KMQQ…SLNV) and 245–317 (SSSY…NSRN). The tract at residues 210-226 (NVFPLADGMVRAQMGGK) is JNK-binding domain (JBD); essential for its function in axon elongation. Positions 261–270 (SSAAATPSTT) are enriched in low complexity. Residues Thr-266, Thr-276, and Thr-287 each carry the phosphothreonine modification. Residues 271–282 (GTKSNTPTSSVP) show a composition bias toward polar residues. Over residues 305–315 (NNKRAREKRNS) the composition is skewed to basic residues. Residues Ser-315, Ser-365, and Ser-366 each carry the phosphoserine modification. Residues 424–459 (QLLETKNALNVVKNDLIAKVDQLSGEQEVLKGELEA) are leucine zipper-like domain (LZ); essential for its function in axon elongation. The stretch at 443–534 (VDQLSGEQEV…KERLMELQEA (92 aa)) forms a coiled coil. The interaction with NTRK2 stretch occupies residues 459-515 (AAKQAKVKLENRIKELEEELKRVKSEAVTARREPREEVEDDKIPMAQRRRFTRVEMA). One can recognise an RH2 domain in the interval 506–580 (RRRFTRVEMA…SPPPAKRSYP (75 aa)). Ser-588 and Ser-662 each carry phosphoserine. Disordered regions lie at residues 704–754 (WKPN…EADA), 844–952 (PRSN…TTSS), and 1281–1307 (RIGD…LSKA). The span at 724–750 (LTCDREGEGEPKSTHPSPEKKKAKEVP) shows a compositional bias: basic and acidic residues. Over residues 914 to 937 (APTQSSSTQPASENGSESDGSIVQ) the composition is skewed to polar residues. Low complexity predominate over residues 941–952 (EPSGESSATTSS). The span at 1285-1294 (GEDDETEEGT) shows a compositional bias: acidic residues.

The protein belongs to the JIP scaffold family. As to quaternary structure, forms homo- or heterooligomeric complexes. The central region of MAPK8IP3 interacts with the C-terminal of MAPK8IP2 but not MAPK8IP1. Binds specific components of the JNK signaling pathway namely MAPK8/JNK1, MAPK9/JNK2 and MAPK10/JNK3 to the N-terminal region, MAP2K4/MKK4 and MAP2K7/MKK7 to the central region and MAP3K11 to the C-terminal region. Binds the TPR motif-containing C-terminal of kinesin light chain, KLC1. Pre-assembled MAPK8IP1 scaffolding complexes are then transported as a cargo of kinesin, to the required subcellular location. Interacts with ROCK1 and this interaction is enhanced by ultraviolet-B (UVB) radiation. Interacts with SH3RF2. Interacts with NTRK3/TRKC. Interacts with NTRK2/TRKB. Phosphorylation by ROCK1 is crucial for the recruitment of JNK.

It localises to the cytoplasm. The protein localises to the golgi apparatus. The protein resides in the cytoplasmic vesicle. It is found in the cell projection. Its subcellular location is the growth cone. It localises to the axon. The protein localises to the dendrite. The protein resides in the perinuclear region. Its function is as follows. The JNK-interacting protein (JIP) group of scaffold proteins selectively mediates JNK signaling by aggregating specific components of the MAPK cascade to form a functional JNK signaling module. May function as a regulator of vesicle transport, through interactions with the JNK-signaling components and motor proteins. Promotes neuronal axon elongation in a kinesin- and JNK-dependent manner. Activates cofilin at axon tips via local activation of JNK, thereby regulating filopodial dynamics and enhancing axon elongation. Its binding to kinesin heavy chains (KHC), promotes kinesin-1 motility along microtubules and is essential for axon elongation and regeneration. Regulates cortical neuronal migration by mediating NTRK2/TRKB anterograde axonal transport during brain development. Acts as an adapter that bridges the interaction between NTRK2/TRKB and KLC1 and drives NTRK2/TRKB axonal but not dendritic anterograde transport, which is essential for subsequent BDNF-triggered signaling and filopodia formation. This chain is C-Jun-amino-terminal kinase-interacting protein 3 (Mapk8ip3), found in Rattus norvegicus (Rat).